Reading from the N-terminus, the 488-residue chain is MTTLMVQGTTSDAGKSTLVTALCRWATRQGVAVVPFKPQNMALNSAVTADGGEIGRAQAVQAQAAFLEPHTDMNPVLLKPNSDTGAQVIIHGRAVTSMNAVAYHDYKAIAMQAVLASHERLSAAYPLVMVEGAGSPAEINLRAGDIANMGFAEAVDCPVLLIADINRGGVFAHLVGTLELLSPSEQARIKGFIINRFRGDIALLQPGLDWLEQRTGKPVVGVLPYVMDLHLEAEDGIDQRQTDKAEQVLKVVVPVLPRISNHTDFDPLRLHPQVDLQFIGPGQAIPPADLIILPGSKSVRSDLAYLRANGWESAIRRHLRYGGKLLGICGGLQMLGEQVHDPLGLEGAPGSSAGLGLLAFETQLEAEKQLRNVRGRLALEDAEVSGYEIHAGVTTGAALEKAAVHLDDGRCDGAQSLDGQIFGTYLHGLFESPAASAALLRWAGLYDVQEVDYHGLRERDIERLADLVEKHLDTGLLRELCGISPCSS.

Residues 248–435 form the GATase cobBQ-type domain; sequence VLKVVVPVLP…LHGLFESPAA (188 aa). The active-site Nucleophile is cysteine 329. Histidine 427 is a catalytic residue.

This sequence belongs to the CobB/CobQ family. CobQ subfamily.

It functions in the pathway cofactor biosynthesis; adenosylcobalamin biosynthesis. Catalyzes amidations at positions B, D, E, and G on adenosylcobyrinic A,C-diamide. NH(2) groups are provided by glutamine, and one molecule of ATP is hydrogenolyzed for each amidation. This is Cobyric acid synthase from Pseudomonas fluorescens (strain Pf0-1).